The following is a 101-amino-acid chain: UPF0060 membrane protein ACIAD1364 (101 aa).

A run of 3 helical transmembrane segments spans residues 24-44 (WLWL…TLHP), 50-70 (IYAA…RFID), and 79-99 (IWGG…PQGL).

Belongs to the UPF0060 family.

It is found in the cell inner membrane. The chain is UPF0060 membrane protein ACIAD1364 from Acinetobacter baylyi (strain ATCC 33305 / BD413 / ADP1).